The chain runs to 196 residues: Probable malonic semialdehyde reductase RutE (196 aa).

Belongs to the nitroreductase family. HadB/RutE subfamily. It depends on FMN as a cofactor.

It catalyses the reaction 3-hydroxypropanoate + NADP(+) = 3-oxopropanoate + NADPH + H(+). Its function is as follows. May reduce toxic product malonic semialdehyde to 3-hydroxypropionic acid, which is excreted. The polypeptide is Probable malonic semialdehyde reductase RutE (Shigella dysenteriae serotype 1 (strain Sd197)).